The sequence spans 427 residues: N-formyl-4-amino-5-aminomethyl-2-methylpyrimidine deformylase (427 aa).

His-91 lines the Zn(2+) pocket. Asp-93 is an active-site residue. Asp-124 lines the Zn(2+) pocket. The active-site Proton acceptor is Glu-158. Zn(2+)-binding residues include Glu-159, Asp-182, and His-396.

Belongs to the peptidase M20A family. It depends on Zn(2+) as a cofactor. Requires Co(2+) as cofactor.

The catalysed reaction is N-formyl-4-amino-5-aminomethyl-2-methylpyrimidine + H2O = 4-amino-5-aminomethyl-2-methylpyrimidine + formate. It functions in the pathway cofactor biosynthesis; thiamine diphosphate biosynthesis. Catalyzes the deformylation of the formylaminopyrimidine N-formyl-4-amino-5-aminomethyl-2-methylpyrimidine (FAMP) to give the corresponding aminopyrimidine. The protein is N-formyl-4-amino-5-aminomethyl-2-methylpyrimidine deformylase of Halalkalibacterium halodurans (strain ATCC BAA-125 / DSM 18197 / FERM 7344 / JCM 9153 / C-125) (Bacillus halodurans).